A 524-amino-acid polypeptide reads, in one-letter code: FAD-dependent monooxygenase opdD (524 aa).

Glu48 and Arg145 together coordinate FAD.

This sequence belongs to the paxM FAD-dependent monooxygenase family.

It functions in the pathway secondary metabolite biosynthesis. In terms of biological role, FAD-dependent monooxygenase; part of the gene cluster that mediates the biosynthesis of oxopyrrolidines, polyketide-amino acid hybrid compounds with feature structures of tetramic acid. Does not seem to play a role in oxopyrrolidines A and B biosynthesis. May be involved in further modifications of these oxopyrrolidines. This is FAD-dependent monooxygenase opdD from Penicillium oxalicum (strain 114-2 / CGMCC 5302) (Penicillium decumbens).